We begin with the raw amino-acid sequence, 1390 residues long: Nuclear pore complex protein 14 (1390 aa).

Composition is skewed to polar residues over residues 434–455 (SQKPISAPPSDQTPVTKPSTVF) and 464–521 (LKSS…STPK). Disordered regions lie at residues 434-530 (SQKP…KISD), 851-874 (PSSSLFSASPSTPSTKSDAATQAD), and 985-1118 (QEIE…SKAA). A compositionally biased stretch (low complexity) spans 851–864 (PSSSLFSASPSTPS). Over residues 986 to 1033 (EIEKASSKVETLNKTEEVKDEKSENEVTPDLKSEEPKSLETKVKEEPK) the composition is skewed to basic and acidic residues. Positions 1051-1071 (KTPSFSFNSTTTPKSTSSTSS) are enriched in low complexity. The stretch at 1073 to 1074 (FG) is repeat 1. A 17 X 2 AA repeats of F-G region spans residues 1073–1373 (FGGGLKTQTP…TPAPTSSVFG (301 aa)). Over residues 1078–1090 (KTQTPSSSNSTNI) the composition is skewed to polar residues. Residues 1091 to 1092 (FG) form repeat 2. Low complexity predominate over residues 1095–1109 (TTTTATPTPASNTSS). 6 consecutive repeat copies span residues 1111–1112 (FG), 1122–1123 (FG), 1125–1126 (FG), 1163–1164 (FG), 1166–1167 (FG), and 1178–1179 (FG). Positions 1183-1280 (TAPTVPNVDD…QASAPATGTS (98 aa)) are disordered. Over residues 1201–1210 (NGGGSGGFMS) the composition is skewed to gly residues. The segment covering 1231 to 1243 (TSTGTSASSSSWL) has biased composition (low complexity). The stretch at 1244 to 1245 (FG) is repeat 9. Low complexity predominate over residues 1264–1280 (TAGSSAQQASAPATGTS). 8 consecutive repeat copies span residues 1283 to 1284 (FG), 1289 to 1290 (FG), 1295 to 1296 (FG), 1300 to 1301 (FG), 1315 to 1316 (FG), 1344 to 1345 (FG), 1357 to 1358 (FG), and 1372 to 1373 (FG). A compositionally biased stretch (polar residues) spans 1342–1371 (SLFGGGATPQTNTSIFGGGANTTPAPTSSV). Positions 1342 to 1390 (SLFGGGATPQTNTSIFGGGANTTPAPTSSVFGGGASANANKPTSFTSWR) are disordered. Over residues 1378–1390 (ANANKPTSFTSWR) the composition is skewed to polar residues.

Interacts with caspase ced-3 (via propeptide); the interaction tethers ced-3 to the nuclear membrane and prevents its autoprocessing in absence of ced-4.

It is found in the nucleus. It localises to the nuclear pore complex. Its subcellular location is the nucleus membrane. May serve as a docking site in the receptor-mediated import of substrates across the nuclear pore complex. Plays a role in apoptosis by tethering caspase ced-3 to the nuclear membrane preventing its autoprocessing in absence of ced-4. The sequence is that of Nuclear pore complex protein 14 from Caenorhabditis elegans.